The sequence spans 866 residues: Probable beta-glucosidase F (866 aa).

A signal peptide spans 1-20; the sequence is MAAFPAYLALLSYLVPGALS. Residues asparagine 65, asparagine 73, and asparagine 257 are each glycosylated (N-linked (GlcNAc...) asparagine). Aspartate 285 is a catalytic residue. 8 N-linked (GlcNAc...) asparagine glycosylation sites follow: asparagine 328, asparagine 360, asparagine 395, asparagine 421, asparagine 474, asparagine 659, asparagine 664, and asparagine 724. Positions 725–748 are disordered; the sequence is SSKTYPYPDGYTTEPKPAPRAGGA.

Belongs to the glycosyl hydrolase 3 family.

Its subcellular location is the secreted. It carries out the reaction Hydrolysis of terminal, non-reducing beta-D-glucosyl residues with release of beta-D-glucose.. It participates in glycan metabolism; cellulose degradation. Functionally, beta-glucosidases are one of a number of cellulolytic enzymes involved in the degradation of cellulosic biomass. Catalyzes the last step releasing glucose from the inhibitory cellobiose. This is Probable beta-glucosidase F (bglF) from Aspergillus flavus (strain ATCC 200026 / FGSC A1120 / IAM 13836 / NRRL 3357 / JCM 12722 / SRRC 167).